Consider the following 235-residue polypeptide: 5'-methylthioadenosine/S-adenosylhomocysteine nucleosidase (235 aa).

Residue glutamate 12 is the Proton acceptor of the active site. Residues glycine 78, methionine 153, and 174–175 (ME) each bind substrate. Aspartate 198 serves as the catalytic Proton donor.

The protein belongs to the PNP/UDP phosphorylase family. MtnN subfamily.

The catalysed reaction is S-adenosyl-L-homocysteine + H2O = S-(5-deoxy-D-ribos-5-yl)-L-homocysteine + adenine. It catalyses the reaction S-methyl-5'-thioadenosine + H2O = 5-(methylsulfanyl)-D-ribose + adenine. The enzyme catalyses 5'-deoxyadenosine + H2O = 5-deoxy-D-ribose + adenine. Its pathway is amino-acid biosynthesis; L-methionine biosynthesis via salvage pathway; S-methyl-5-thio-alpha-D-ribose 1-phosphate from S-methyl-5'-thioadenosine (hydrolase route): step 1/2. Its function is as follows. Catalyzes the irreversible cleavage of the glycosidic bond in both 5'-methylthioadenosine (MTA) and S-adenosylhomocysteine (SAH/AdoHcy) to adenine and the corresponding thioribose, 5'-methylthioribose and S-ribosylhomocysteine, respectively. Also cleaves 5'-deoxyadenosine, a toxic by-product of radical S-adenosylmethionine (SAM) enzymes, into 5-deoxyribose and adenine. This chain is 5'-methylthioadenosine/S-adenosylhomocysteine nucleosidase, found in Geobacillus kaustophilus (strain HTA426).